Consider the following 236-residue polypeptide: Orotidine 5'-phosphate decarboxylase (236 aa).

Residues Asp-13, Lys-35, 62–71 (DLKFYDIPQT), Thr-123, Arg-184, Gln-193, Gly-213, and Arg-214 each bind substrate. Residue Lys-64 is the Proton donor of the active site.

This sequence belongs to the OMP decarboxylase family. Type 1 subfamily. In terms of assembly, homodimer.

It catalyses the reaction orotidine 5'-phosphate + H(+) = UMP + CO2. Its pathway is pyrimidine metabolism; UMP biosynthesis via de novo pathway; UMP from orotate: step 2/2. Catalyzes the decarboxylation of orotidine 5'-monophosphate (OMP) to uridine 5'-monophosphate (UMP). The sequence is that of Orotidine 5'-phosphate decarboxylase from Coxiella burnetii (strain CbuK_Q154) (Coxiella burnetii (strain Q154)).